Here is a 795-residue protein sequence, read N- to C-terminus: Phenylalanine--tRNA ligase beta subunit (795 aa).

In terms of domain architecture, tRNA-binding spans 39–148 (AAEFNGVVIG…LDAPLGTDLR (110 aa)). A B5 domain is found at 401–476 (PKPAQILLRR…RIYGYNNIPN (76 aa)). Residues aspartate 454, aspartate 460, glutamate 463, and glutamate 464 each contribute to the Mg(2+) site. The 94-residue stretch at 701–794 (SKFPANRRDI…LKTEFNASLR (94 aa)) folds into the FDX-ACB domain.

The protein belongs to the phenylalanyl-tRNA synthetase beta subunit family. Type 1 subfamily. In terms of assembly, tetramer of two alpha and two beta subunits. Requires Mg(2+) as cofactor.

The protein resides in the cytoplasm. It catalyses the reaction tRNA(Phe) + L-phenylalanine + ATP = L-phenylalanyl-tRNA(Phe) + AMP + diphosphate + H(+). The sequence is that of Phenylalanine--tRNA ligase beta subunit from Shewanella oneidensis (strain ATCC 700550 / JCM 31522 / CIP 106686 / LMG 19005 / NCIMB 14063 / MR-1).